The sequence spans 376 residues: Anhydro-N-acetylmuramic acid kinase (376 aa).

16–23 (GTSMDGVD) contributes to the ATP binding site.

The protein belongs to the anhydro-N-acetylmuramic acid kinase family.

The enzyme catalyses 1,6-anhydro-N-acetyl-beta-muramate + ATP + H2O = N-acetyl-D-muramate 6-phosphate + ADP + H(+). The protein operates within amino-sugar metabolism; 1,6-anhydro-N-acetylmuramate degradation. Its pathway is cell wall biogenesis; peptidoglycan recycling. Its function is as follows. Catalyzes the specific phosphorylation of 1,6-anhydro-N-acetylmuramic acid (anhMurNAc) with the simultaneous cleavage of the 1,6-anhydro ring, generating MurNAc-6-P. Is required for the utilization of anhMurNAc either imported from the medium or derived from its own cell wall murein, and thus plays a role in cell wall recycling. The polypeptide is Anhydro-N-acetylmuramic acid kinase (Paraburkholderia xenovorans (strain LB400)).